We begin with the raw amino-acid sequence, 185 residues long: Putative gustatory receptor clone PTE01 (185 aa).

A helical transmembrane segment spans residues M1–A11. Residues D12 to Q42 are Extracellular-facing. A helical transmembrane segment spans residues M43–Y62. The Cytoplasmic segment spans residues D63–G84. A helical transmembrane segment spans residues L85–V105. At L106–N138 the chain is on the extracellular side. The chain crosses the membrane as a helical span at residues I139–Y160. The Cytoplasmic portion of the chain corresponds to Y161–T182. Residues C183–S185 form a helical membrane-spanning segment.

The protein belongs to the G-protein coupled receptor 1 family. As to expression, tongue specific.

It is found in the cell membrane. In terms of biological role, possible taste receptor. This is Putative gustatory receptor clone PTE01 from Rattus norvegicus (Rat).